Reading from the N-terminus, the 146-residue chain is Hemoglobin subunit theta (146 aa).

Residues 2 to 146 (HFTAEEKSVI…VATALAHKYH (145 aa)) form the Globin domain. Positions 63 and 92 each coordinate heme b.

The protein belongs to the globin family.

This is Hemoglobin subunit theta from Sus scrofa (Pig).